We begin with the raw amino-acid sequence, 347 residues long: Large ribosomal subunit protein uL3 (347 aa).

The segment at arginine 325–glutamine 347 is disordered.

It belongs to the universal ribosomal protein uL3 family. As to quaternary structure, part of the 50S ribosomal subunit. Forms a cluster with proteins L14 and L24e.

Its function is as follows. One of the primary rRNA binding proteins, it binds directly near the 3'-end of the 23S rRNA, where it nucleates assembly of the 50S subunit. In Thermococcus onnurineus (strain NA1), this protein is Large ribosomal subunit protein uL3.